Reading from the N-terminus, the 141-residue chain is Nucleoside triphosphatase NudI (141 aa).

The Nudix hydrolase domain occupies Met-1–Leu-141. Positions Gly-38–Gly-59 match the Nudix box motif.

This sequence belongs to the Nudix hydrolase family. NudI subfamily. Monomer. Mg(2+) is required as a cofactor.

The catalysed reaction is a ribonucleoside 5'-triphosphate + H2O = a ribonucleoside 5'-phosphate + diphosphate + H(+). The enzyme catalyses a 2'-deoxyribonucleoside 5'-triphosphate + H2O = a 2'-deoxyribonucleoside 5'-phosphate + diphosphate + H(+). It catalyses the reaction dUTP + H2O = dUMP + diphosphate + H(+). It carries out the reaction dTTP + H2O = dTMP + diphosphate + H(+). The catalysed reaction is dCTP + H2O = dCMP + diphosphate + H(+). Functionally, catalyzes the hydrolysis of nucleoside triphosphates, with a preference for pyrimidine deoxynucleoside triphosphates (dUTP, dTTP and dCTP). The polypeptide is Nucleoside triphosphatase NudI (Salmonella arizonae (strain ATCC BAA-731 / CDC346-86 / RSK2980)).